Consider the following 185-residue polypeptide: Elongation factor P (185 aa).

It belongs to the elongation factor P family.

Its subcellular location is the cytoplasm. It functions in the pathway protein biosynthesis; polypeptide chain elongation. Involved in peptide bond synthesis. Stimulates efficient translation and peptide-bond synthesis on native or reconstituted 70S ribosomes in vitro. Probably functions indirectly by altering the affinity of the ribosome for aminoacyl-tRNA, thus increasing their reactivity as acceptors for peptidyl transferase. This chain is Elongation factor P, found in Azoarcus sp. (strain BH72).